Here is a 248-residue protein sequence, read N- to C-terminus: Probable transcriptional regulatory protein AZC_0510 (248 aa).

This sequence belongs to the TACO1 family.

The protein resides in the cytoplasm. The protein is Probable transcriptional regulatory protein AZC_0510 of Azorhizobium caulinodans (strain ATCC 43989 / DSM 5975 / JCM 20966 / LMG 6465 / NBRC 14845 / NCIMB 13405 / ORS 571).